The following is a 433-amino-acid chain: Serine carboxypeptidase-like 8 (433 aa).

The signal sequence occupies residues 1-19 (MSLKIKFLLLLVLYHHVDS). 3 cysteine pairs are disulfide-bonded: cysteine 78-cysteine 323, cysteine 241-cysteine 255, and cysteine 279-cysteine 289. Asparagine 99 carries an N-linked (GlcNAc...) asparagine glycan. Serine 173 is an active-site residue. 3 N-linked (GlcNAc...) asparagine glycosylation sites follow: asparagine 283, asparagine 324, and asparagine 342. Active-site residues include aspartate 358 and histidine 411. Residue asparagine 418 is glycosylated (N-linked (GlcNAc...) asparagine).

The protein belongs to the peptidase S10 family. In terms of processing, N-glycosylated. As to expression, highly expressed in seedlings. Expressed in leaves, stems, flowers and siliques, and at low levels in roots.

The protein localises to the vacuole. It carries out the reaction 1-O-(trans-sinapoyl)-beta-D-glucose + (S)-malate = sinapoyl (S)-malate + D-glucose. It catalyses the reaction 2 1-O-(trans-sinapoyl)-beta-D-glucose = 1,2-di-O-sinapoyl beta-D-glucose + D-glucose. 95% inhibition by diisopropyl fluorophosphate (DFP) and 30% by phenylmethylsulfonyl fluoride (PMSF). In terms of biological role, involved in plants secondary metabolism. Functions as acyltransferase to form the sinapate ester sinapoylmalate. Also capable of catalyzing the formation of 1,2-bis-O-sinapoyl beta-D-glucoside. This Arabidopsis thaliana (Mouse-ear cress) protein is Serine carboxypeptidase-like 8.